The sequence spans 313 residues: Homoserine O-succinyltransferase (313 aa).

The active-site Acyl-thioester intermediate is the cysteine 142. Substrate contacts are provided by lysine 163 and serine 192. Residue histidine 235 is the Proton acceptor of the active site. Glutamate 237 is a catalytic residue. Arginine 249 lines the substrate pocket.

It belongs to the MetA family.

Its subcellular location is the cytoplasm. The enzyme catalyses L-homoserine + succinyl-CoA = O-succinyl-L-homoserine + CoA. The protein operates within amino-acid biosynthesis; L-methionine biosynthesis via de novo pathway; O-succinyl-L-homoserine from L-homoserine: step 1/1. Transfers a succinyl group from succinyl-CoA to L-homoserine, forming succinyl-L-homoserine. The protein is Homoserine O-succinyltransferase of Shewanella oneidensis (strain ATCC 700550 / JCM 31522 / CIP 106686 / LMG 19005 / NCIMB 14063 / MR-1).